Reading from the N-terminus, the 736-residue chain is DNA topoisomerase 1 (736 aa).

The 112-residue stretch at Lys-2–Ile-113 folds into the Toprim domain. Residues Glu-8 and Asp-82 each coordinate Mg(2+). One can recognise a Topo IA-type catalytic domain in the interval Asp-129–Ile-552. Residues Ser-163–Gln-168 form an interaction with DNA region. The active-site O-(5'-phospho-DNA)-tyrosine intermediate is the Tyr-297. 4 C4-type zinc fingers span residues Cys-572–Cys-598, Cys-616–Cys-642, Cys-663–Cys-689, and Cys-702–Cys-725.

The protein belongs to the type IA topoisomerase family. In terms of assembly, monomer. Mg(2+) serves as cofactor.

It catalyses the reaction ATP-independent breakage of single-stranded DNA, followed by passage and rejoining.. Functionally, releases the supercoiling and torsional tension of DNA, which is introduced during the DNA replication and transcription, by transiently cleaving and rejoining one strand of the DNA duplex. Introduces a single-strand break via transesterification at a target site in duplex DNA. The scissile phosphodiester is attacked by the catalytic tyrosine of the enzyme, resulting in the formation of a DNA-(5'-phosphotyrosyl)-enzyme intermediate and the expulsion of a 3'-OH DNA strand. The free DNA strand then undergoes passage around the unbroken strand, thus removing DNA supercoils. Finally, in the religation step, the DNA 3'-OH attacks the covalent intermediate to expel the active-site tyrosine and restore the DNA phosphodiester backbone. The chain is DNA topoisomerase 1 from Helicobacter pylori (strain J99 / ATCC 700824) (Campylobacter pylori J99).